The following is a 734-amino-acid chain: 1,4-alpha-glucan branching enzyme GlgB (734 aa).

Catalysis depends on aspartate 413, which acts as the Nucleophile. Glutamate 466 (proton donor) is an active-site residue.

It belongs to the glycosyl hydrolase 13 family. GlgB subfamily. In terms of assembly, monomer.

It carries out the reaction Transfers a segment of a (1-&gt;4)-alpha-D-glucan chain to a primary hydroxy group in a similar glucan chain.. It participates in glycan biosynthesis; glycogen biosynthesis. Its function is as follows. Catalyzes the formation of the alpha-1,6-glucosidic linkages in glycogen by scission of a 1,4-alpha-linked oligosaccharide from growing alpha-1,4-glucan chains and the subsequent attachment of the oligosaccharide to the alpha-1,6 position. The protein is 1,4-alpha-glucan branching enzyme GlgB of Nitrosomonas europaea (strain ATCC 19718 / CIP 103999 / KCTC 2705 / NBRC 14298).